The sequence spans 357 residues: 4-hydroxy-2-oxovalerate aldolase (357 aa).

The tract at residues 1–21 is disordered; sequence MSQEAARDAAAGRPVQIHDPT. The 251-residue stretch at 15-265 folds into the Pyruvate carboxyltransferase domain; that stretch reads VQIHDPTLRD…RTGIDLYRLL (251 aa). 23–24 is a substrate binding site; sequence RD. Asp-24 provides a ligand contact to Mn(2+). His-27 acts as the Proton acceptor in catalysis. Residues Ser-177 and His-204 each coordinate substrate. The Mn(2+) site is built by His-204 and His-206.

This sequence belongs to the 4-hydroxy-2-oxovalerate aldolase family.

The catalysed reaction is (S)-4-hydroxy-2-oxopentanoate = acetaldehyde + pyruvate. Functionally, involved in the biosynthesis of the peptidyl nucleoside antibiotic nikkomycin. The sequence is that of 4-hydroxy-2-oxovalerate aldolase from Streptomyces tendae.